Reading from the N-terminus, the 180-residue chain is Probable chorismate pyruvate-lyase (180 aa).

3 residues coordinate substrate: arginine 82, leucine 120, and glutamate 165.

The protein belongs to the UbiC family.

The protein localises to the cytoplasm. It catalyses the reaction chorismate = 4-hydroxybenzoate + pyruvate. It functions in the pathway cofactor biosynthesis; ubiquinone biosynthesis. Functionally, removes the pyruvyl group from chorismate, with concomitant aromatization of the ring, to provide 4-hydroxybenzoate (4HB) for the ubiquinone pathway. This Photobacterium profundum (strain SS9) protein is Probable chorismate pyruvate-lyase.